Consider the following 454-residue polypeptide: Carbamoyl phosphate synthase arginine-specific small chain (454 aa).

Residues 1–29 (MMFSRFFKAVPARAPAFSSPLPVYQARTM) constitute a mitochondrion transit peptide. The Glutamine amidotransferase type-1 domain maps to 219–406 (HVAVLDCGVK…IDSVKKYKNS (188 aa)). Catalysis depends on C295, which acts as the Nucleophile. Catalysis depends on residues H379 and E381.

This sequence belongs to the CarA family. Heterodimer composed of 2 chains; the small (or glutamine) chain promotes the hydrolysis of glutamine to ammonia, which is used by the large (or ammonia) chain to synthesize carbamoyl phosphate.

Its subcellular location is the mitochondrion matrix. It carries out the reaction hydrogencarbonate + L-glutamine + 2 ATP + H2O = carbamoyl phosphate + L-glutamate + 2 ADP + phosphate + 2 H(+). The enzyme catalyses L-glutamine + H2O = L-glutamate + NH4(+). Its pathway is amino-acid biosynthesis; L-arginine biosynthesis; carbamoyl phosphate from bicarbonate: step 1/1. Its function is as follows. Small subunit of the arginine-specific carbamoyl phosphate synthase (CPSase). CPSase catalyzes the formation of carbamoyl phosphate from the ammonia moiety of glutamine, carbonate, and phosphate donated by ATP, the first step of the arginine biosynthetic pathway. The small subunit (glutamine amidotransferase) binds and cleaves glutamine to supply the large subunit with the substrate ammonia. The protein is Carbamoyl phosphate synthase arginine-specific small chain (cpa-1) of Emericella nidulans (strain FGSC A4 / ATCC 38163 / CBS 112.46 / NRRL 194 / M139) (Aspergillus nidulans).